A 452-amino-acid chain; its full sequence is Exodeoxyribonuclease 7 large subunit (452 aa).

Belongs to the XseA family. In terms of assembly, heterooligomer composed of large and small subunits.

It localises to the cytoplasm. It carries out the reaction Exonucleolytic cleavage in either 5'- to 3'- or 3'- to 5'-direction to yield nucleoside 5'-phosphates.. Bidirectionally degrades single-stranded DNA into large acid-insoluble oligonucleotides, which are then degraded further into small acid-soluble oligonucleotides. This is Exodeoxyribonuclease 7 large subunit from Bacillus mycoides (strain KBAB4) (Bacillus weihenstephanensis).